Consider the following 85-residue polypeptide: Large ribosomal subunit protein bL31B (85 aa).

Belongs to the bacterial ribosomal protein bL31 family. Type B subfamily. In terms of assembly, part of the 50S ribosomal subunit.

The chain is Large ribosomal subunit protein bL31B from Stutzerimonas stutzeri (strain A1501) (Pseudomonas stutzeri).